Here is a 284-residue protein sequence, read N- to C-terminus: uncharacterized protein (284 aa).

The protein belongs to the AtsA family.

This is an uncharacterized protein from Mycobacterium leprae (strain TN).